We begin with the raw amino-acid sequence, 693 residues long: Glycine--tRNA ligase beta subunit (693 aa).

A compositionally biased stretch (basic and acidic residues) spans 65–74; it reads QPDKSVEKRG. A disordered region spans residues 65 to 84; that stretch reads QPDKSVEKRGPAVKAAFDDS.

It belongs to the class-II aminoacyl-tRNA synthetase family. As to quaternary structure, tetramer of two alpha and two beta subunits.

The protein resides in the cytoplasm. The catalysed reaction is tRNA(Gly) + glycine + ATP = glycyl-tRNA(Gly) + AMP + diphosphate. The sequence is that of Glycine--tRNA ligase beta subunit from Marinobacter nauticus (strain ATCC 700491 / DSM 11845 / VT8) (Marinobacter aquaeolei).